The following is a 338-amino-acid chain: Pyridoxal 5'-phosphate synthase subunit PdxS (338 aa).

Residue D66 participates in D-ribose 5-phosphate binding. K123 functions as the Schiff-base intermediate with D-ribose 5-phosphate in the catalytic mechanism. G195 provides a ligand contact to D-ribose 5-phosphate. K207 provides a ligand contact to D-glyceraldehyde 3-phosphate. Residues G256 and 277-278 (GS) each bind D-ribose 5-phosphate.

It belongs to the PdxS/SNZ family. In the presence of PdxT, forms a dodecamer of heterodimers.

It carries out the reaction aldehydo-D-ribose 5-phosphate + D-glyceraldehyde 3-phosphate + L-glutamine = pyridoxal 5'-phosphate + L-glutamate + phosphate + 3 H2O + H(+). Its pathway is cofactor biosynthesis; pyridoxal 5'-phosphate biosynthesis. Catalyzes the formation of pyridoxal 5'-phosphate from ribose 5-phosphate (RBP), glyceraldehyde 3-phosphate (G3P) and ammonia. The ammonia is provided by the PdxT subunit. Can also use ribulose 5-phosphate and dihydroxyacetone phosphate as substrates, resulting from enzyme-catalyzed isomerization of RBP and G3P, respectively. The chain is Pyridoxal 5'-phosphate synthase subunit PdxS from Saccharolobus islandicus (strain L.S.2.15 / Lassen #1) (Sulfolobus islandicus).